The primary structure comprises 62 residues: Ferredoxin-1 (62 aa).

2 4Fe-4S ferredoxin-type domains span residues 3–32 and 33–62; these read WTVTVDTDKCTGDGECVDVCPVEVYELQDG and KAVPVNEEECLGCESCVEVCEAGAITVEEN. The [3Fe-4S] cluster site is built by cysteine 12 and cysteine 18. Residues cysteine 22, cysteine 42, cysteine 45, and cysteine 48 each contribute to the [4Fe-4S] cluster site. Cysteine 52 lines the [3Fe-4S] cluster pocket.

Homodimer. It depends on [3Fe-4S] cluster as a cofactor. Requires [4Fe-4S] cluster as cofactor.

In terms of biological role, ferredoxins are iron-sulfur proteins that transfer electrons in a wide variety of metabolic reactions. This ferredoxin serves as a carrier for pyruvate dehydrogenase. This Nitratidesulfovibrio vulgaris (strain DSM 19637 / Miyazaki F) (Desulfovibrio vulgaris) protein is Ferredoxin-1.